The chain runs to 157 residues: SsrA-binding protein (157 aa).

A disordered region spans residues 128 to 157 (LARGKKQHDKRAAEKERDWEREKQRVMRRG). Residues 137–157 (KRAAEKERDWEREKQRVMRRG) are compositionally biased toward basic and acidic residues.

It belongs to the SmpB family.

It is found in the cytoplasm. Required for rescue of stalled ribosomes mediated by trans-translation. Binds to transfer-messenger RNA (tmRNA), required for stable association of tmRNA with ribosomes. tmRNA and SmpB together mimic tRNA shape, replacing the anticodon stem-loop with SmpB. tmRNA is encoded by the ssrA gene; the 2 termini fold to resemble tRNA(Ala) and it encodes a 'tag peptide', a short internal open reading frame. During trans-translation Ala-aminoacylated tmRNA acts like a tRNA, entering the A-site of stalled ribosomes, displacing the stalled mRNA. The ribosome then switches to translate the ORF on the tmRNA; the nascent peptide is terminated with the 'tag peptide' encoded by the tmRNA and targeted for degradation. The ribosome is freed to recommence translation, which seems to be the essential function of trans-translation. The polypeptide is SsrA-binding protein (Methylococcus capsulatus (strain ATCC 33009 / NCIMB 11132 / Bath)).